Consider the following 65-residue polypeptide: Small ribosomal subunit protein bS21 (65 aa).

The protein belongs to the bacterial ribosomal protein bS21 family.

This is Small ribosomal subunit protein bS21 from Trichlorobacter lovleyi (strain ATCC BAA-1151 / DSM 17278 / SZ) (Geobacter lovleyi).